The following is a 495-amino-acid chain: 3-octaprenyl-4-hydroxybenzoate carboxy-lyase (495 aa).

N171 contacts Mn(2+). Prenylated FMN is bound by residues I174–R176, R188–L190, and R193–G194. A Mn(2+)-binding site is contributed by E237. D286 (proton donor) is an active-site residue.

Belongs to the UbiD family. In terms of assembly, homohexamer. Prenylated FMN serves as cofactor. Mn(2+) is required as a cofactor.

It localises to the cell membrane. The enzyme catalyses a 4-hydroxy-3-(all-trans-polyprenyl)benzoate + H(+) = a 2-(all-trans-polyprenyl)phenol + CO2. It participates in cofactor biosynthesis; ubiquinone biosynthesis. Catalyzes the decarboxylation of 3-octaprenyl-4-hydroxy benzoate to 2-octaprenylphenol, an intermediate step in ubiquinone biosynthesis. This Hamiltonella defensa subsp. Acyrthosiphon pisum (strain 5AT) protein is 3-octaprenyl-4-hydroxybenzoate carboxy-lyase.